A 490-amino-acid polypeptide reads, in one-letter code: Membrane-bound lytic murein transglycosylase F (490 aa).

Positions 1–32 (MFALTAYRLRCAAWLLATGIFLLLAGCSEAKA) are cleaved as a signal peptide. Residues 33-269 (PTALERVQKE…RLKDRYYGHV (237 aa)) are non-LT domain. The segment at 270–490 (DVLGYVGAYT…PDDDEGDGKL (221 aa)) is LT domain. Glu316 is a catalytic residue. The interval 467–490 (AESGLHLPGVNKTRPDDDEGDGKL) is disordered.

This sequence in the N-terminal section; belongs to the bacterial solute-binding protein 3 family. It in the C-terminal section; belongs to the transglycosylase Slt family.

The protein resides in the cell outer membrane. It carries out the reaction Exolytic cleavage of the (1-&gt;4)-beta-glycosidic linkage between N-acetylmuramic acid (MurNAc) and N-acetylglucosamine (GlcNAc) residues in peptidoglycan, from either the reducing or the non-reducing ends of the peptidoglycan chains, with concomitant formation of a 1,6-anhydrobond in the MurNAc residue.. In terms of biological role, murein-degrading enzyme that degrades murein glycan strands and insoluble, high-molecular weight murein sacculi, with the concomitant formation of a 1,6-anhydromuramoyl product. Lytic transglycosylases (LTs) play an integral role in the metabolism of the peptidoglycan (PG) sacculus. Their lytic action creates space within the PG sacculus to allow for its expansion as well as for the insertion of various structures such as secretion systems and flagella. The chain is Membrane-bound lytic murein transglycosylase F from Pseudomonas paraeruginosa (strain DSM 24068 / PA7) (Pseudomonas aeruginosa (strain PA7)).